The primary structure comprises 105 residues: Small ribosomal subunit protein uS10 (105 aa).

Belongs to the universal ribosomal protein uS10 family. As to quaternary structure, part of the 30S ribosomal subunit.

In terms of biological role, involved in the binding of tRNA to the ribosomes. The chain is Small ribosomal subunit protein uS10 from Acidobacterium capsulatum (strain ATCC 51196 / DSM 11244 / BCRC 80197 / JCM 7670 / NBRC 15755 / NCIMB 13165 / 161).